The chain runs to 206 residues: Bacteriochlorophyll synthase 23 kDa chain (206 aa).

The protein operates within porphyrin-containing compound metabolism; bacteriochlorophyll biosynthesis (light-independent). This Cereibacter sphaeroides (strain ATCC 17023 / DSM 158 / JCM 6121 / CCUG 31486 / LMG 2827 / NBRC 12203 / NCIMB 8253 / ATH 2.4.1.) (Rhodobacter sphaeroides) protein is Bacteriochlorophyll synthase 23 kDa chain (bchJ).